The sequence spans 343 residues: Ribosomal RNA-processing protein 8 (343 aa).

Residues 1–123 form a disordered region; that stretch reads MGKKRKITDE…NDDVAAAPEE (123 aa). Basic and acidic residues predominate over residues 7–33; sequence ITDEKDAQHVPAEKREKVENWLKKSTE. Composition is skewed to basic residues over residues 45–59 and 89–101; these read KKKR…KLAA and KKKR…KKKF. Over residues 112–123 the composition is skewed to acidic residues; sequence TENDDVAAAPEE. S-adenosyl-L-methionine is bound by residues His169, Gly204, Asp224, Asp236, Met237, and Cys253.

Belongs to the methyltransferase superfamily. RRP8 family.

The protein resides in the nucleus. Its subcellular location is the nucleolus. Functionally, probable methyltransferase required to silence rDNA. Involved in regulation of antisense ribosomal siRNA production. Required for the N1-methyladenosine modification of 26S rRNAs. The sequence is that of Ribosomal RNA-processing protein 8 (rrp-8) from Caenorhabditis elegans.